Here is a 406-residue protein sequence, read N- to C-terminus: Tryptophan synthase beta chain (406 aa).

An N6-(pyridoxal phosphate)lysine modification is found at Lys-99.

It belongs to the TrpB family. In terms of assembly, tetramer of two alpha and two beta chains. Requires pyridoxal 5'-phosphate as cofactor.

The enzyme catalyses (1S,2R)-1-C-(indol-3-yl)glycerol 3-phosphate + L-serine = D-glyceraldehyde 3-phosphate + L-tryptophan + H2O. Its pathway is amino-acid biosynthesis; L-tryptophan biosynthesis; L-tryptophan from chorismate: step 5/5. Functionally, the beta subunit is responsible for the synthesis of L-tryptophan from indole and L-serine. The sequence is that of Tryptophan synthase beta chain from Sinorhizobium fredii (strain NBRC 101917 / NGR234).